The chain runs to 801 residues: MRVQSLLRAQSLATSSLRCSARSVARAPSRCALSTIAASRTPYTNGSKTDTWIEGQKIQNQRRWQTTAAKVLEQAKDDPSTLTQEKIVENLDPVEWERLSRVRNIGIAAHIDSGKTTATERVLFYTGRINAIHEVRGKDAVGAKMDSMDLEREKGITIQSAATFCDWVKKNDEGKEEKYHINLIDTPGHIDFTIEVERALRVLDGAVMILCAVSGVQSQTITVDRQMRRYNIPRISFVNKMDRMGANPWKAVEQINQKLRIPAAALQVPIGREDGFLGVVDLVRMKAIYNEGPKGEIIRETDEIPADIVELCKEKRQELIEKLADVDDEIAEIFLDEKEPTIAQIKAAIRRATISLKFTPVMMGSALADKSVQPMLDAVCDYLPNPSEVENMALDKKRAEAPVKLVSYNSLPFVGLAFKLEESSFGQLTYIRVYQGTLRKGMNVFNARSDKKIRIPKIVRMHSNDMEEIPEIGAGEICAVFGVDCASGDTFTDGNLAYTMTSMFVPEPVISLSIKPKHTKDTPNFSKAMSRFTREDPTFRVHTDAESQETIISGMGELHLDIYVERMRREYRVECETGQPQVAYRETMTQRVNFDHTLKKQSGGSGDYARVVGWMEPAESLGENKFEQQISGGTISEKFLFACEKGFMASTAKGPLLGHRVLGTSMVINDGATHAVDSSEMAFKNATQQAFRKAFKAGAPQVLEPLMKTTITAPNEFQGSVVGLLNKRNAVINDTEIGPEDFTVYADCSLNSMFGFSSQLRASTQGKGEFSMEFSHYSPAPPQLQRELVAKYEKEQAAKNA.

Residues 1 to 65 (MRVQSLLRAQ…QKIQNQRRWQ (65 aa)) constitute a mitochondrion transit peptide. The tr-type G domain occupies 100–387 (SRVRNIGIAA…AVCDYLPNPS (288 aa)). Residues 109-116 (AHIDSGKT), 185-189 (DTPGH), and 239-242 (NKMD) each bind GTP.

The protein belongs to the TRAFAC class translation factor GTPase superfamily. Classic translation factor GTPase family. EF-G/EF-2 subfamily.

It localises to the mitochondrion. It participates in protein biosynthesis; polypeptide chain elongation. Functionally, mitochondrial GTPase that catalyzes the GTP-dependent ribosomal translocation step during translation elongation. During this step, the ribosome changes from the pre-translocational (PRE) to the post-translocational (POST) state as the newly formed A-site-bound peptidyl-tRNA and P-site-bound deacylated tRNA move to the P and E sites, respectively. Catalyzes the coordinated movement of the two tRNA molecules, the mRNA and conformational changes in the ribosome. This is Elongation factor G, mitochondrial (mef1) from Pyrenophora tritici-repentis (strain Pt-1C-BFP) (Wheat tan spot fungus).